Here is an 88-residue protein sequence, read N- to C-terminus: Large ribosomal subunit protein eL37 (88 aa).

The Zn(2+) site is built by Cys19, Cys22, Cys34, and Cys37. The segment at 19-37 (CNRCGKRSFHVQKKTCASC) adopts a C4-type zinc-finger fold.

The protein belongs to the eukaryotic ribosomal protein eL37 family. Requires Zn(2+) as cofactor.

Functionally, binds to the 23S rRNA. This chain is Large ribosomal subunit protein eL37 (RPL37), found in Debaryomyces hansenii (strain ATCC 36239 / CBS 767 / BCRC 21394 / JCM 1990 / NBRC 0083 / IGC 2968) (Yeast).